The chain runs to 282 residues: Bis(5'-nucleosyl)-tetraphosphatase, symmetrical (282 aa).

It belongs to the Ap4A hydrolase family.

The enzyme catalyses P(1),P(4)-bis(5'-adenosyl) tetraphosphate + H2O = 2 ADP + 2 H(+). Hydrolyzes diadenosine 5',5'''-P1,P4-tetraphosphate to yield ADP. The chain is Bis(5'-nucleosyl)-tetraphosphatase, symmetrical from Sodalis glossinidius (strain morsitans).